Reading from the N-terminus, the 261-residue chain is Trifolitoxin immunity protein (261 aa).

Functionally, required for TFX resistance. The sequence is that of Trifolitoxin immunity protein (tfxG) from Rhizobium leguminosarum bv. trifolii.